Here is a 2988-residue protein sequence, read N- to C-terminus: NBPF family member NBPF14 (2988 aa).

A coiled-coil region spans residues 75-119 (RQFKEEKLAEQLKQAEELRQYKVLVHSQERELTQLREKLREGRDA). 3 disordered regions span residues 161-200 (KLSP…SKVP), 451-474 (EKVQ…PEDS), and 520-566 (WEDA…EGYS). Residues 165–177 (ENDEDEDEDVQVE) are compositionally biased toward acidic residues. Olduvai domains lie at 165–259 (ENDE…NILP), 436–528 (ENDN…HIIP), 529–600 (ENES…VDIG), 601–692 (RHRW…PSCP), 695–750 (SREL…LDVD), 751–843 (RIKK…RSKK), 844–919 (ERRR…LDVD), 920–1012 (RIKK…RSKK), 1013–1105 (ERRR…PSCP), 1108–1163 (SREL…LDVD), 1164–1256 (RIKK…RSKK), 1257–1349 (ERRR…PSCP), 1352–1407 (SREL…LDVD), 1408–1500 (RIKK…RSKK), 1501–1593 (ERRR…PSCP), 1596–1651 (SREL…LDVD), 1652–1744 (RFKK…RSKK), 1745–1837 (ERRR…PSCP), 1840–1895 (SREL…LDVD), 1896–1988 (RIKK…RSKK), 1989–2081 (ERRR…PSCP), 2084–2139 (SREL…LDVD), 2140–2232 (RIKK…RSKK), 2233–2325 (ERRR…PSCP), 2328–2383 (SREL…LDVD), 2384–2476 (RIKK…RSKK), 2477–2569 (ERRR…PSCP), 2572–2627 (SREL…LDVD), 2628–2720 (RIKK…RSKK), 2721–2813 (ERRR…PSCP), 2816–2889 (SREL…RSKK), and 2890–2988 (ERRR…IFPQ). Positions 190–200 (EVQKAEESKVP) are enriched in basic and acidic residues. Composition is skewed to acidic residues over residues 530-539 (NESDDEEEEE) and 550-562 (ESEE…ESWD). Disordered regions lie at residues 754–773 (KDEE…SREL), 828–871 (EKKG…LDEK), and 999–1038 (KGKG…ELLD). Basic residues-rich tracts occupy residues 831–849 (GKGK…RRGR) and 1000–1018 (GKGK…RRGR). Residues 1243–1282 (KGKGKKRRGRRSKKERRRGRKEGEEDQNPPCPRLSRELLD) form a disordered region. Residues 1244 to 1262 (GKGKKRRGRRSKKERRRGR) are compositionally biased toward basic residues. Residues 1487–1521 (KGKGKKRRGRRSKKERRRGRKEGEEDQNPPCPRLS) form a disordered region. The span at 1488 to 1506 (GKGKKRRGRRSKKERRRGR) shows a compositional bias: basic residues. Residues 1731–1770 (KGKGKKRRGRRSKKERRRGRKEGEEDQNPPCPRLSRELLD) form a disordered region. The segment covering 1732 to 1750 (GKGKKRRGRRSKKERRRGR) has biased composition (basic residues). Residues 1975-2014 (KGKGKKRRGRRSKKERRRGRKEGEEDQNPPCPRLSRELLD) form a disordered region. The segment covering 1976–1994 (GKGKKRRGRRSKKERRRGR) has biased composition (basic residues). Positions 2219-2258 (KGKGKKRRGRRSKKERRRGRKEGEEDQNPPCPRLSRELLD) are disordered. Over residues 2220–2238 (GKGKKRRGRRSKKERRRGR) the composition is skewed to basic residues. The interval 2463-2502 (KGKGKKRRGRRSKKERRRGRKEGEEDQNPPCPRLSRELLD) is disordered. Over residues 2464 to 2482 (GKGKKRRGRRSKKERRRGR) the composition is skewed to basic residues. Disordered stretches follow at residues 2707–2745 (KGKG…RELL) and 2877–2909 (GKGK…CPRL). 2 stretches are compositionally biased toward basic residues: residues 2708-2726 (GKGK…RRGR) and 2877-2895 (GKGK…RRGR).

This sequence belongs to the NBPF family. In terms of tissue distribution, expressed in spleen and fetal liver.

The protein localises to the cytoplasm. The polypeptide is NBPF family member NBPF14 (Homo sapiens (Human)).